The chain runs to 407 residues: Patatin-like protein 2 (407 aa).

Residues 22 to 228 (LSIDGGGIRG…AANNPALLAI (207 aa)) form the PNPLA domain. The GXGXXG signature appears at 26–31 (GGGIRG). The GXSXG signature appears at 64–68 (GTSTG). Catalysis depends on S66, which acts as the Nucleophile. The active-site Proton acceptor is the D215. The DGA/G signature appears at 215 to 217 (DGG). The residue at position 398 (S398) is a Phosphoserine.

Belongs to the patatin family. As to expression, expressed specifically in roots.

The protein localises to the cytoplasm. Possesses non-specific lipolytic acyl hydrolase (LAH) activity. Catalyzes the hydrolysis of the galactolipids monogalactosyldiacylglycerol (MGDG) and digalactosyldiacylglycerol (DGDG), and less efficiently the phoshpolipids phosphatidylcholine (PC), phosphatidylethanolamine (PE), phosphatidylglycerol (PG), phosphatidic acid (PA), phosphatidylserine (PS) and phosphatidylinositol (PI). Favors the release of fatty acid at the sn-1 position for PC or PE and the sn-2 position for PG, PA, PS and PI. Negatively affects disease resistance to the necrotic fungal pathogen Botrytis cinerea and the avirulent bacteria Pseudomonas syringae by promoting cell death and reducing the efficiency of the hypersensitive response, respectively. However, PLP2 contributes to resistance to cucumber mosaic virus (CMV), an obligate parasite inducing hypersensitive response. May negatively regulate oxylipin production, possibly via participating in membrane repair that includes removal of oxidatively modified lipids. This is Patatin-like protein 2 (PLP2) from Arabidopsis thaliana (Mouse-ear cress).